A 133-amino-acid polypeptide reads, in one-letter code: Fatty acid-binding protein (133 aa).

Belongs to the calycin superfamily. Fatty-acid binding protein (FABP) family.

The chain is Fatty acid-binding protein from Clonorchis sinensis (Chinese liver fluke).